Consider the following 361-residue polypeptide: Protein RecA (361 aa).

68-75 (GPESSGKT) lines the ATP pocket. The interval 342-361 (PEGAKENISAKDDVAVDTKE) is disordered. Basic and acidic residues predominate over residues 344 to 361 (GAKENISAKDDVAVDTKE).

It belongs to the RecA family.

It localises to the cytoplasm. Functionally, can catalyze the hydrolysis of ATP in the presence of single-stranded DNA, the ATP-dependent uptake of single-stranded DNA by duplex DNA, and the ATP-dependent hybridization of homologous single-stranded DNAs. It interacts with LexA causing its activation and leading to its autocatalytic cleavage. The protein is Protein RecA of Clostridium beijerinckii (strain ATCC 51743 / NCIMB 8052) (Clostridium acetobutylicum).